A 251-amino-acid polypeptide reads, in one-letter code: Triosephosphate isomerase (251 aa).

9–11 (NWK) serves as a coordination point for substrate. His95 serves as the catalytic Electrophile. Glu167 (proton acceptor) is an active-site residue. Substrate is bound by residues Gly173, Ser213, and 234–235 (GG).

It belongs to the triosephosphate isomerase family. Homodimer.

It localises to the cytoplasm. It catalyses the reaction D-glyceraldehyde 3-phosphate = dihydroxyacetone phosphate. Its pathway is carbohydrate biosynthesis; gluconeogenesis. The protein operates within carbohydrate degradation; glycolysis; D-glyceraldehyde 3-phosphate from glycerone phosphate: step 1/1. Its function is as follows. Involved in the gluconeogenesis. Catalyzes stereospecifically the conversion of dihydroxyacetone phosphate (DHAP) to D-glyceraldehyde-3-phosphate (G3P). The chain is Triosephosphate isomerase from Carboxydothermus hydrogenoformans (strain ATCC BAA-161 / DSM 6008 / Z-2901).